Here is a 346-residue protein sequence, read N- to C-terminus: Holliday junction branch migration complex subunit RuvB (346 aa).

A large ATPase domain (RuvB-L) region spans residues 1–188 (MSDEYGPPER…FGIVQRLAYY (188 aa)). Residues L27, R28, G69, K72, T73, T74, 135–137 (EDF), R178, Y188, and R225 each bind ATP. T73 is a Mg(2+) binding site. Residues 189 to 259 (PVDELTRIVQ…VAADAMELLD (71 aa)) are small ATPAse domain (RuvB-S). The segment at 262–346 (RNGLDEQDRR…QAAGSGDLFG (85 aa)) is head domain (RuvB-H). DNA contacts are provided by R298, R317, and R322.

This sequence belongs to the RuvB family. As to quaternary structure, homohexamer. Forms an RuvA(8)-RuvB(12)-Holliday junction (HJ) complex. HJ DNA is sandwiched between 2 RuvA tetramers; dsDNA enters through RuvA and exits via RuvB. An RuvB hexamer assembles on each DNA strand where it exits the tetramer. Each RuvB hexamer is contacted by two RuvA subunits (via domain III) on 2 adjacent RuvB subunits; this complex drives branch migration. In the full resolvosome a probable DNA-RuvA(4)-RuvB(12)-RuvC(2) complex forms which resolves the HJ.

It is found in the cytoplasm. The catalysed reaction is ATP + H2O = ADP + phosphate + H(+). In terms of biological role, the RuvA-RuvB-RuvC complex processes Holliday junction (HJ) DNA during genetic recombination and DNA repair, while the RuvA-RuvB complex plays an important role in the rescue of blocked DNA replication forks via replication fork reversal (RFR). RuvA specifically binds to HJ cruciform DNA, conferring on it an open structure. The RuvB hexamer acts as an ATP-dependent pump, pulling dsDNA into and through the RuvAB complex. RuvB forms 2 homohexamers on either side of HJ DNA bound by 1 or 2 RuvA tetramers; 4 subunits per hexamer contact DNA at a time. Coordinated motions by a converter formed by DNA-disengaged RuvB subunits stimulates ATP hydrolysis and nucleotide exchange. Immobilization of the converter enables RuvB to convert the ATP-contained energy into a lever motion, pulling 2 nucleotides of DNA out of the RuvA tetramer per ATP hydrolyzed, thus driving DNA branch migration. The RuvB motors rotate together with the DNA substrate, which together with the progressing nucleotide cycle form the mechanistic basis for DNA recombination by continuous HJ branch migration. Branch migration allows RuvC to scan DNA until it finds its consensus sequence, where it cleaves and resolves cruciform DNA. This Halorhodospira halophila (strain DSM 244 / SL1) (Ectothiorhodospira halophila (strain DSM 244 / SL1)) protein is Holliday junction branch migration complex subunit RuvB.